A 196-amino-acid polypeptide reads, in one-letter code: Molybdenum cofactor guanylyltransferase (196 aa).

GTP is bound by residues 10 to 12 (LAG), Lys-23, Asn-51, Asp-69, and Asp-99. Asp-99 contacts Mg(2+).

The protein belongs to the MobA family. In terms of assembly, monomer. It depends on Mg(2+) as a cofactor.

The protein resides in the cytoplasm. It catalyses the reaction Mo-molybdopterin + GTP + H(+) = Mo-molybdopterin guanine dinucleotide + diphosphate. Transfers a GMP moiety from GTP to Mo-molybdopterin (Mo-MPT) cofactor (Moco or molybdenum cofactor) to form Mo-molybdopterin guanine dinucleotide (Mo-MGD) cofactor. The polypeptide is Molybdenum cofactor guanylyltransferase (Shewanella amazonensis (strain ATCC BAA-1098 / SB2B)).